The chain runs to 289 residues: 4-hydroxy-tetrahydrodipicolinate synthase (289 aa).

Thr44 is a binding site for pyruvate. Tyr132 acts as the Proton donor/acceptor in catalysis. Lys161 functions as the Schiff-base intermediate with substrate in the catalytic mechanism. Residue Ile201 coordinates pyruvate.

It belongs to the DapA family. In terms of assembly, homotetramer; dimer of dimers.

Its subcellular location is the cytoplasm. It catalyses the reaction L-aspartate 4-semialdehyde + pyruvate = (2S,4S)-4-hydroxy-2,3,4,5-tetrahydrodipicolinate + H2O + H(+). It functions in the pathway amino-acid biosynthesis; L-lysine biosynthesis via DAP pathway; (S)-tetrahydrodipicolinate from L-aspartate: step 3/4. In terms of biological role, catalyzes the condensation of (S)-aspartate-beta-semialdehyde [(S)-ASA] and pyruvate to 4-hydroxy-tetrahydrodipicolinate (HTPA). This Methanocaldococcus jannaschii (strain ATCC 43067 / DSM 2661 / JAL-1 / JCM 10045 / NBRC 100440) (Methanococcus jannaschii) protein is 4-hydroxy-tetrahydrodipicolinate synthase.